We begin with the raw amino-acid sequence, 218 residues long: Adenylate kinase (218 aa).

10–15 (GAGKGT) lines the ATP pocket. An NMP region spans residues 30–59 (STGDMLRAAVKAATPLGLAAKKIMDEGGLV). AMP is bound by residues Thr31, Arg36, 57–59 (GLV), 85–88 (GFPR), and Gln92. Residues 122–159 (GRRVHLASGRTYHVTFNPPAVPDKDDLTGEPLVQRNDD) are LID. Residues Arg123 and 132-133 (TY) contribute to the ATP site. Residues Arg156 and Arg167 each contribute to the AMP site. Position 203 (Gly203) interacts with ATP.

The protein belongs to the adenylate kinase family. In terms of assembly, monomer.

It localises to the cytoplasm. The catalysed reaction is AMP + ATP = 2 ADP. It functions in the pathway purine metabolism; AMP biosynthesis via salvage pathway; AMP from ADP: step 1/1. In terms of biological role, catalyzes the reversible transfer of the terminal phosphate group between ATP and AMP. Plays an important role in cellular energy homeostasis and in adenine nucleotide metabolism. This Chlorobaculum tepidum (strain ATCC 49652 / DSM 12025 / NBRC 103806 / TLS) (Chlorobium tepidum) protein is Adenylate kinase.